A 286-amino-acid chain; its full sequence is Aminoglycoside N(3)-acetyltransferase III (286 aa).

It belongs to the antibiotic N-acetyltransferase family.

The enzyme catalyses a 2-deoxystreptamine antibiotic + acetyl-CoA = an N(3)-acetyl-2-deoxystreptamine antibiotic + CoA + H(+). Resistance to antibiotics containing the 2-deoxy-streptamine ring including gentamicin, kanamycin, tobramycin, neomycin and apramycin. The protein is Aminoglycoside N(3)-acetyltransferase III (aacC2) of Acinetobacter baumannii.